We begin with the raw amino-acid sequence, 1596 residues long: Transcription factor Zelda (1596 aa).

Disordered stretches follow at residues 1-143 (MTSI…QQQQ), 209-273 (SGLG…GGAA), and 490-530 (TSPA…SVLP). The span at 13–24 (AAEALASSSATD) shows a compositional bias: low complexity. The span at 25-53 (SGGGGAGGGGGGGGGGSGGPGAGGTGGVG) shows a compositional bias: gly residues. The span at 60-72 (NATISAAADSSDN) shows a compositional bias: polar residues. 2 stretches are compositionally biased toward low complexity: residues 73 to 123 (QPGT…ITHQ) and 226 to 267 (SAPS…QTPG). Positions 501 to 518 (GGPGQEGAAGAAPGGGYR) are enriched in gly residues. The C2H2-type 1 zinc finger occupies 552-576 (YNCTACNKWFTSSGHLKRHYNTTLH). Disordered stretches follow at residues 578–813 (NAVK…TTTA), 825–945 (EDSN…MGML), 1017–1074 (GEQH…MPLT), and 1252–1322 (QMQH…TTLP). The segment covering 610 to 634 (RGNAAAAAAAAAAAASASGQGQQQQ) has biased composition (low complexity). The segment covering 635–653 (PPIPPPPANVPPPEPPRSP) has biased composition (pro residues). Over residues 656–668 (YGGGGGLGVGAMG) the composition is skewed to gly residues. Residues 673–682 (SQYSASPSPT) are compositionally biased toward polar residues. 2 stretches are compositionally biased toward low complexity: residues 683–709 (QQQQ…GYGY) and 719–753 (NASP…HHNS). The span at 768–781 (PHNNNTTQMPSSQM) shows a compositional bias: polar residues. Residues 796-813 (TTTRAPQITTTATTTTTA) show a composition bias toward low complexity. The span at 830–840 (THTHTHTHPNH) shows a compositional bias: basic residues. Over residues 849-858 (SSSSSSSMAT) the composition is skewed to low complexity. Residues 864-877 (QELRDQEQADDHLH) show a composition bias toward basic and acidic residues. A compositionally biased stretch (low complexity) spans 879-916 (HQQASQQYLLSARHYHSSTPNTLSSSNTNPSTPSSNSP). The interval 904–1297 (SNTNPSTPSS…PLAKKRRGGN (394 aa)) is transactivation activation domain (TAD). The segment covering 921–932 (RQEQQGTDFSRT) has biased composition (polar residues). The span at 933 to 944 (TPPPQPLPPMGM) shows a compositional bias: pro residues. The segment covering 1019–1036 (QHQRQEADHHQQQRELHQ) has biased composition (basic and acidic residues). 2 stretches are compositionally biased toward low complexity: residues 1037-1062 (LDQQ…SPTS) and 1252-1275 (QMQH…QQQQ). 2 stretches are compositionally biased toward polar residues: residues 1276–1286 (ILADQTQTMAQ) and 1309–1322 (SSVG…TTLP). The segment at 1326 to 1349 (IKCLECDKEFTKNCYLTQHNKSFH) adopts a C2H2-type 2 zinc-finger fold. The C2H2-type 3; degenerate zinc-finger motif lies at 1355 to 1378 (FRCQKCGKRFQSEDVYTTHLGRHR). 2 C2H2-type zinc fingers span residues 1384–1407 (HKCE…EAIH) and 1413–1435 (HMCD…LETH).

Zygotically expressed in the developing embryonic germ layers, nervous system, imaginal disk primordia and in larval wing and eye disks. As to expression, detected in the germline cells of the ovary, in unfertilized eggs and throughout early development. Later, it becomes mostly restricted to the nervous system and specific head regions. Also expressed in imaginal wing disks in third instar larvae.

The protein resides in the nucleus. The protein localises to the chromosome. Functionally, transcription factor required for zygotic genome activation (ZGA), a critical event in early embryonic development during which the developmental control passes from maternally provided mRNAs to the expression of the zygotic genome after fertilization. Binds to regulatory DNA sequences containing a 5'-CAGGTAG-3' sequence motif, which are highly enriched among developmental enhancers. Within 1 hour into development, or by the embryo's 8th nuclear cycle, binds the majority of its motifs genome-wide. Zelda-binding promotes nucleosome depletion and chromatin accessibility, thereby facilitating the binding of patterning transcription factors, including the binding of the dorsoventral patterning transcription factors dorsal (dl) and twist (twi), and the anteroposterior patterning transcription factors bicoid (bcd) and caudal (cad). Promotes the activity of patterning transcription factors, such as bcd and dl, by lowering the concentration threshold required for transcriptional activation. Required both for the earliest (minor) and major waves of transcription during ZGA. Also involved in maternal mRNA clearance during the maternal-to-zygote transition by promoting expression of microRNAs (miRNAs), such as miR-1, miR-9a and miR-309, which mediate degradation of maternally-loaded RNAs. Also involved in post-blastoderm development: nvolved in nervous system development by maintaining neuroblasts in an undifferentiated state and equired for wing disk development. In terms of biological role, constitutes the main isoform expressed throughout development. Transcription factor required for zygotic genome activation (ZGA). Acts as a dominant negative inhibitor of transcription factor activity of isoform A. The chain is Transcription factor Zelda from Drosophila melanogaster (Fruit fly).